Consider the following 267-residue polypeptide: Indole-3-glycerol phosphate synthase (267 aa).

This sequence belongs to the TrpC family.

The enzyme catalyses 1-(2-carboxyphenylamino)-1-deoxy-D-ribulose 5-phosphate + H(+) = (1S,2R)-1-C-(indol-3-yl)glycerol 3-phosphate + CO2 + H2O. It participates in amino-acid biosynthesis; L-tryptophan biosynthesis; L-tryptophan from chorismate: step 4/5. In Deinococcus radiodurans (strain ATCC 13939 / DSM 20539 / JCM 16871 / CCUG 27074 / LMG 4051 / NBRC 15346 / NCIMB 9279 / VKM B-1422 / R1), this protein is Indole-3-glycerol phosphate synthase.